Here is a 355-residue protein sequence, read N- to C-terminus: GTP 3',8-cyclase (355 aa).

The Radical SAM core domain occupies 16 to 242 (RYGRRATDMR…PDPRARDGAP (227 aa)). A GTP-binding site is contributed by Arg25. [4Fe-4S] cluster is bound by residues Cys32 and Cys36. Tyr38 contacts S-adenosyl-L-methionine. Residue Cys39 coordinates [4Fe-4S] cluster. Position 76 (Arg76) interacts with GTP. Residue Gly80 coordinates S-adenosyl-L-methionine. Thr107 serves as a coordination point for GTP. Position 131 (Ser131) interacts with S-adenosyl-L-methionine. Lys168 lines the GTP pocket. Position 202 (Met202) interacts with S-adenosyl-L-methionine. [4Fe-4S] cluster is bound by residues Cys277 and Cys280. 282–284 (RTR) provides a ligand contact to GTP. [4Fe-4S] cluster is bound at residue Cys294.

This sequence belongs to the radical SAM superfamily. MoaA family. In terms of assembly, monomer. It depends on [4Fe-4S] cluster as a cofactor.

The enzyme catalyses GTP + AH2 + S-adenosyl-L-methionine = (8S)-3',8-cyclo-7,8-dihydroguanosine 5'-triphosphate + 5'-deoxyadenosine + L-methionine + A + H(+). The protein operates within cofactor biosynthesis; molybdopterin biosynthesis. Catalyzes, together with MoaC, the conversion of 5'-GTP to cyclic pyranopterin monophosphate (cPMP or molybdopterin precursor Z). Its function is as follows. Catalyzes the cyclization of GTP to (8S)-3',8-cyclo-7,8-dihydroguanosine 5'-triphosphate. In Paenarthrobacter nicotinovorans (Arthrobacter nicotinovorans), this protein is GTP 3',8-cyclase.